Consider the following 245-residue polypeptide: uncharacterized protein (245 aa).

4 helical membrane passes run 10-30 (FYTLFGLIWSLLVFFFLSPWY), 94-114 (TLAFLSTTFLIYFTIIFYVHI), 134-154 (VLIGSPLVSFFLSFITLFLII), and 196-216 (RGWIILMVDTILTFFATIYCW).

Its subcellular location is the membrane. This is an uncharacterized protein from Dictyostelium discoideum (Social amoeba).